The following is a 206-amino-acid chain: MARYLGPKLKLSRREGTDLFLKSGVRAIDTKCKIEQAPGQHGARKPRLSDYGVQLREKQKVRRIYGVLERQFRNYYKEAARLKGNTGENLLALLEGRLDNVVYRMGFGATRAEARQLVSHKAIMVNGRVVNIASYQVSPNDVVSIREKAKKQSRVKAALELAEQREKPTWLEVDAGKMEGTFKRKPERSDLSADINEHLIVELYSK.

Residues 96–156 (GRLDNVVYRM…EKAKKQSRVK (61 aa)) form the S4 RNA-binding domain.

This sequence belongs to the universal ribosomal protein uS4 family. As to quaternary structure, part of the 30S ribosomal subunit. Contacts protein S5. The interaction surface between S4 and S5 is involved in control of translational fidelity.

One of the primary rRNA binding proteins, it binds directly to 16S rRNA where it nucleates assembly of the body of the 30S subunit. In terms of biological role, with S5 and S12 plays an important role in translational accuracy. The chain is Small ribosomal subunit protein uS4 from Escherichia fergusonii (strain ATCC 35469 / DSM 13698 / CCUG 18766 / IAM 14443 / JCM 21226 / LMG 7866 / NBRC 102419 / NCTC 12128 / CDC 0568-73).